Reading from the N-terminus, the 509-residue chain is Probable Xaa-Pro aminopeptidase MAC_04092 (509 aa).

Asp-273, Asp-284, Glu-437, and Glu-478 together coordinate Mn(2+).

It belongs to the peptidase M24B family. Mn(2+) serves as cofactor.

It catalyses the reaction Release of any N-terminal amino acid, including proline, that is linked to proline, even from a dipeptide or tripeptide.. Functionally, catalyzes the removal of a penultimate prolyl residue from the N-termini of peptides. In Metarhizium acridum (strain CQMa 102), this protein is Probable Xaa-Pro aminopeptidase MAC_04092.